A 374-amino-acid polypeptide reads, in one-letter code: RNA ligase 1 (374 aa).

The ATP site is built by Y37, R54, and K75. K99 functions as the N6-AMP-lysine intermediate in the catalytic mechanism. E159, K240, and K242 together coordinate ATP. D272 is a binding site for Mg(2+).

It belongs to the Tequatrovirus RNA ligase 1 family. It depends on Mg(2+) as a cofactor.

It carries out the reaction ATP + (ribonucleotide)n-3'-hydroxyl + 5'-phospho-(ribonucleotide)m = (ribonucleotide)n+m + AMP + diphosphate.. Its function is as follows. Involved in countering a host defense mechanism which, following viral infection, activates the host anticodon nuclease and shuts off viral translation. Repairs 5'-PO4 and 3'-OH groups in the cleaved host tRNA. The nick ligation reaction entails three nucleotidyl transfer steps. In the first step, the RNA ligase reacts with ATP in the absence of nucleic acid to form a covalent ligase-AMP intermediate and release pyrophosphate. In step 2, the ligase-AMP binds to the nicked duplex nucleic acid and transfers the adenylate to the 5'-PO4 terminus to form an adenylylated nicked intermediate. In step 3, the RNA ligase directs the attack of the nick 3'-OH on the 5'-phosphoanhydride linkage, resulting in a repaired 3'-5' phosphodiester and release of AMP. The chain is RNA ligase 1 (63) from Enterobacteria phage T4 (Bacteriophage T4).